The following is a 597-amino-acid chain: Leukocyte immunoglobulin-like receptor subfamily B member 2 (597 aa).

Residues 1–21 form the signal peptide; the sequence is MTPIVTVLICLGLSLGPRTRV. Over 22-460 the chain is Extracellular; sequence QTGTIPKPTL…QSGLGRHLGV (439 aa). 4 Ig-like C2-type domains span residues 27-110, 111-229, 230-318, and 330-419; these read PKPT…SELS, DPLV…SLSV, QPGP…ILIT, and QPGP…LVVS. Intrachain disulfides connect cysteine 49-cysteine 98, cysteine 144-cysteine 196, cysteine 156-cysteine 166, and cysteine 245-cysteine 296. N-linked (GlcNAc...) asparagine glycans are attached at residues asparagine 280, asparagine 301, and asparagine 340. A disulfide bond links cysteine 345 and cysteine 396. The disordered stretch occupies residues 417–451; it reads VVSGPSMGSSPPPTGPISTPGPEDQPLTPTGSDPQ. A helical transmembrane segment spans residues 461 to 481; sequence VIGILVAVVLLLLLLLLLFLI. Over 482–597 the chain is Cytoplasmic; it reads LRHRRQGKHW…PSIYATLAIH (116 aa). The tract at residues 491 to 523 is disordered; sequence WTSTQRKADFQHPAGAVGPEPTDRGLQWRSSPA. Short sequence motifs (ITIM motif) lie at residues 530–535, 559–564, and 589–594; these read NLYAAV, VTYAQL, and SIYATL. Residues 537–597 form a disordered region; that stretch reads DTQPEDGVEM…PSIYATLAIH (61 aa).

Binds PTPN6 when phosphorylated. Binds FCGR1A. Interacts with peptide-bound HLA-G-B2M; this interaction is direct. Interacts with peptide-bound HLA-F-B2M; this interaction is direct. Phosphorylated on tyrosine residues. Dephosphorylated by PTPN6. In terms of tissue distribution, expressed in monocytes and at lower levels in myeloid and plasmacytoid dendritic cells. Expressed in tolerogenic IL10-producing dendritic cells. Expressed in myeloid-derived suppressor cells during pregnancy. Detected at low levels in natural killer (NK) cells. Expressed in B cells.

It is found in the cell membrane. Receptor for class I MHC antigens. Recognizes a broad spectrum of HLA-A, HLA-B, HLA-C, HLA-G and HLA-F alleles. Involved in the down-regulation of the immune response and the development of tolerance. Recognizes HLA-G in complex with B2M/beta-2 microglobulin and a nonamer self-peptide (peptide-bound HLA-G-B2M) triggering differentiation of type 1 regulatory T cells and myeloid-derived suppressor cells, both of which actively maintain maternal-fetal tolerance. Competes with CD8A for binding to class I MHC antigens. Inhibits FCGR1A-mediated phosphorylation of cellular proteins and mobilization of intracellular calcium ions. The protein is Leukocyte immunoglobulin-like receptor subfamily B member 2 of Homo sapiens (Human).